A 79-amino-acid polypeptide reads, in one-letter code: Large ribosomal subunit protein bL28 (79 aa).

Belongs to the bacterial ribosomal protein bL28 family.

The protein is Large ribosomal subunit protein bL28 of Christiangramia forsetii (strain DSM 17595 / CGMCC 1.15422 / KT0803) (Gramella forsetii).